Consider the following 98-residue polypeptide: Prolactin-releasing peptide (98 aa).

The first 22 residues, 1 to 22, serve as a signal peptide directing secretion; the sequence is MKAVGAWLLCLLLLGLALQGAA. Phenylalanine 53 carries the phenylalanine amide modification. A propeptide spanning residues 58-98 is cleaved from the precursor; the sequence is AAPGDGPRPGPRRELACIPLEGGAEPSRALLGRLTAQLVQE.

In terms of tissue distribution, more abundantly expressed in the brainstem than the hypothalamus.

Its subcellular location is the secreted. Its function is as follows. Stimulates prolactin (PRL) release and regulates the expression of prolactin through its receptor GPR10. May stimulate lactotrophs directly to secrete PRL. This Ovis aries (Sheep) protein is Prolactin-releasing peptide (PRLH).